Here is a 496-residue protein sequence, read N- to C-terminus: Probable serine/threonine-protein kinase DDB_G0284251 (496 aa).

Residues 1 to 13 (MIEINNNHNNGNG) are compositionally biased toward low complexity. The disordered stretch occupies residues 1 to 25 (MIEINNNHNNGNGKQFPSSQIMPDS). One can recognise a Protein kinase domain in the interval 36–288 (YTLGEKIGRG…AQELLQHPIF (253 aa)). ATP is bound by residues 42–50 (IGRGAFGQV) and K65. The Proton acceptor role is filled by D158. The interval 323-345 (DWGSSSSTSGSSTPLSSSSSSSN) is disordered. Residues 353-386 (EDFNKLQTTIKQQAQTISNLSEEILILKKELKEK) are a coiled coil. The tract at residues 454 to 496 (PQLTPSSSRENISLSNSSSSIPNPNQNQNQNNKSKSKKFGFFS) is disordered. A compositionally biased stretch (low complexity) spans 458 to 486 (PSSSRENISLSNSSSSIPNPNQNQNQNNK). Residues 487–496 (SKSKKFGFFS) show a composition bias toward basic residues.

It belongs to the protein kinase superfamily. STE Ser/Thr protein kinase family. The cofactor is Mg(2+).

The enzyme catalyses L-seryl-[protein] + ATP = O-phospho-L-seryl-[protein] + ADP + H(+). It carries out the reaction L-threonyl-[protein] + ATP = O-phospho-L-threonyl-[protein] + ADP + H(+). The protein is Probable serine/threonine-protein kinase DDB_G0284251 of Dictyostelium discoideum (Social amoeba).